Consider the following 131-residue polypeptide: MNPRRPYPVIFLCRPSSVASSKLASTFMISFLVKKTLSSNTVNSPRGTVRSISRIRNMVSLLLLPTIYIRSLVSYNVYLPITNLEVFLCLDPDVVSIPPPRVCSIASLFILVLFLFCFALRYYVSKLINFK.

2 helical membrane passes run 61–81 (LLLLPTIYIRSLVSYNVYLPI) and 102–122 (VCSIASLFILVLFLFCFALRY).

It localises to the membrane. This is an uncharacterized protein from Saccharomyces cerevisiae (strain ATCC 204508 / S288c) (Baker's yeast).